We begin with the raw amino-acid sequence, 239 residues long: 2',3'-cyclic-nucleotide 3'-phosphodiesterase (239 aa).

Catalysis depends on proton donor/acceptor residues His-39 and His-150.

This sequence belongs to the 2H phosphoesterase superfamily. CPD1 family.

Its subcellular location is the golgi apparatus. The enzyme catalyses ADP-alpha-D-ribose 1'',2''-cyclic phosphate + H2O = ADP-alpha-D-ribose 1''-phosphate + H(+). The catalysed reaction is 2',3'-cyclophospho-AMP + H2O = adenosine 2'-phosphate + H(+). It carries out the reaction 2',3'-cyclophospho-GMP + H2O = guanosine 2'-phosphate + H(+). It catalyses the reaction 2',3'-cyclophospho-UMP + H2O = uridine 2'-phosphate + H(+). The enzyme catalyses 2',3'-cyclophospho-CMP + H2O = cytidine 2'-phosphate + H(+). The catalysed reaction is a nucleoside 2',3'-cyclic phosphate + H2O = a nucleoside 2'-phosphate + H(+). Involved in the metabolism of ADP-ribose 1',2'-cyclic phosphate which is produced as a consequence of tRNA splicing. The polypeptide is 2',3'-cyclic-nucleotide 3'-phosphodiesterase (Saccharomyces cerevisiae (strain ATCC 204508 / S288c) (Baker's yeast)).